The primary structure comprises 73 residues: IVGGRPARPHAWPFMASLQRRGGHFCGATLIMGWGQLGTNRPLPSVLQELNVTVVTAGICFGDSGGPLVCNGL.

Positions 1–73 (IVGGRPARPH…SGGPLVCNGL (73 aa)) constitute a Peptidase S1 domain. The active-site Charge relay system is Ser64.

This sequence belongs to the peptidase S1 family. Elastase subfamily.

May be involved in the degradation of connective tissue in chronic lung disease. The chain is Neutrophil elastase 2B from Equus caballus (Horse).